A 322-amino-acid polypeptide reads, in one-letter code: CRISPR-associated protein Cas1 1 (322 aa).

3 residues coordinate Mn(2+): Glu-149, His-214, and Glu-229.

The protein belongs to the CRISPR-associated endonuclease Cas1 family. As to quaternary structure, homodimer, forms a heterotetramer with a Cas2 homodimer. Requires Mg(2+) as cofactor. It depends on Mn(2+) as a cofactor.

Functionally, CRISPR (clustered regularly interspaced short palindromic repeat), is an adaptive immune system that provides protection against mobile genetic elements (viruses, transposable elements and conjugative plasmids). CRISPR clusters contain spacers, sequences complementary to antecedent mobile elements, and target invading nucleic acids. CRISPR clusters are transcribed and processed into CRISPR RNA (crRNA). Acts as a dsDNA endonuclease. Involved in the integration of spacer DNA into the CRISPR cassette. The protein is CRISPR-associated protein Cas1 1 of Methanobrevibacter ruminantium (strain ATCC 35063 / DSM 1093 / JCM 13430 / OCM 146 / M1) (Methanobacterium ruminantium).